The chain runs to 396 residues: Elongation factor Tu 2 (396 aa).

The tr-type G domain maps to 10–206 (KLHVNVGTIG…ALDTFIPDPT (197 aa)). The tract at residues 19-26 (GHVDHGKT) is G1. 19–26 (GHVDHGKT) serves as a coordination point for GTP. Threonine 26 is a Mg(2+) binding site. Residues 60–64 (GITIS) form a G2 region. Positions 81–84 (DCPG) are G3. GTP is bound by residues 81 to 85 (DCPGH) and 136 to 139 (NKAD). Positions 136–139 (NKAD) are G4. Residues 174-176 (SAR) form a G5 region.

It belongs to the TRAFAC class translation factor GTPase superfamily. Classic translation factor GTPase family. EF-Tu/EF-1A subfamily. In terms of assembly, monomer.

It localises to the cytoplasm. It catalyses the reaction GTP + H2O = GDP + phosphate + H(+). Its function is as follows. GTP hydrolase that promotes the GTP-dependent binding of aminoacyl-tRNA to the A-site of ribosomes during protein biosynthesis. The sequence is that of Elongation factor Tu 2 from Xanthomonas campestris pv. campestris (strain 8004).